Consider the following 131-residue polypeptide: D-ribose pyranase (131 aa).

H20 acts as the Proton donor in catalysis. Substrate-binding positions include D28, H98, and 120–122 (YAN).

Belongs to the RbsD / FucU family. RbsD subfamily. Homodecamer.

It localises to the cytoplasm. It catalyses the reaction beta-D-ribopyranose = beta-D-ribofuranose. It participates in carbohydrate metabolism; D-ribose degradation; D-ribose 5-phosphate from beta-D-ribopyranose: step 1/2. In terms of biological role, catalyzes the interconversion of beta-pyran and beta-furan forms of D-ribose. This chain is D-ribose pyranase, found in Bacillus anthracis (strain A0248).